Consider the following 340-residue polypeptide: DNA polymerase III subunit delta' (340 aa).

As to quaternary structure, the DNA polymerase holoenzyme is a complex that contains 10 different types of subunits. These subunits are organized into 3 functionally essential subassemblies: the pol III core, the beta sliding clamp processivity factor and the clamp-loading complex. The pol III core (subunits alpha,epsilon and theta) contains the polymerase and the 3'-5' exonuclease proofreading activities. The polymerase is tethered to the template via the sliding clamp processivity factor. The clamp-loading complex assembles the beta processivity factor onto the primer template and plays a central role in the organization and communication at the replication fork. This complex contains delta, delta', psi and chi, and copies of either or both of two different DnaX proteins, gamma and tau. The composition of the holoenzyme is, therefore: (alpha,epsilon,theta)[2]-(gamma/tau)[3]-delta,delta', psi,chi-beta[4].

It catalyses the reaction DNA(n) + a 2'-deoxyribonucleoside 5'-triphosphate = DNA(n+1) + diphosphate. DNA polymerase III is a complex, multichain enzyme responsible for most of the replicative synthesis in bacteria. This DNA polymerase also exhibits 3' to 5' exonuclease activity. This chain is DNA polymerase III subunit delta' (holB), found in Yersinia pestis.